The following is a 163-amino-acid chain: Nucleotide-binding protein CJE0423 (163 aa).

Belongs to the YajQ family.

Functionally, nucleotide-binding protein. In Campylobacter jejuni (strain RM1221), this protein is Nucleotide-binding protein CJE0423.